The sequence spans 253 residues: Triosephosphate isomerase (253 aa).

9–11 lines the substrate pocket; sequence NWK. His95 serves as the catalytic Electrophile. Glu167 (proton acceptor) is an active-site residue. Residues Gly173, Ser213, and 234–235 each bind substrate; that span reads GG. At Ser213 the chain carries Phosphoserine.

The protein belongs to the triosephosphate isomerase family. As to quaternary structure, homodimer.

The protein localises to the cytoplasm. The enzyme catalyses D-glyceraldehyde 3-phosphate = dihydroxyacetone phosphate. The protein operates within carbohydrate biosynthesis; gluconeogenesis. Its pathway is carbohydrate degradation; glycolysis; D-glyceraldehyde 3-phosphate from glycerone phosphate: step 1/1. Its function is as follows. Involved in the gluconeogenesis. Catalyzes stereospecifically the conversion of dihydroxyacetone phosphate (DHAP) to D-glyceraldehyde-3-phosphate (G3P). This Geobacillus kaustophilus (strain HTA426) protein is Triosephosphate isomerase.